We begin with the raw amino-acid sequence, 359 residues long: 3-dehydroquinate synthase (359 aa).

NAD(+) is bound by residues 70–75 (DAEGGK), 104–108 (GAATD), 128–129 (TT), K141, and K150. Residues E183, H246, and H262 each coordinate Zn(2+).

Belongs to the sugar phosphate cyclases superfamily. Dehydroquinate synthase family. Requires Co(2+) as cofactor. Zn(2+) is required as a cofactor. NAD(+) serves as cofactor.

The protein resides in the cytoplasm. The enzyme catalyses 7-phospho-2-dehydro-3-deoxy-D-arabino-heptonate = 3-dehydroquinate + phosphate. It participates in metabolic intermediate biosynthesis; chorismate biosynthesis; chorismate from D-erythrose 4-phosphate and phosphoenolpyruvate: step 2/7. Functionally, catalyzes the conversion of 3-deoxy-D-arabino-heptulosonate 7-phosphate (DAHP) to dehydroquinate (DHQ). In Mycolicibacterium gilvum (strain PYR-GCK) (Mycobacterium gilvum (strain PYR-GCK)), this protein is 3-dehydroquinate synthase.